Reading from the N-terminus, the 312-residue chain is MTTAPCVPNASSVARLSGRIQAGIPLAPLTTFRVGGKAEWYCEPHNNLELQQCLAWARAQGIPVTLLGAGSNLLISDAGLPGLVIHTRRLRGMQLLEGGRIWAAAGEPLVNLARAAAKRGWSGLEWAIGIPGTLGGAVVMNAGAHGRAMSDVLVEVQILDEEQEPCRLEPVDLQFGYRRSRLQDSPWTVTGATLQLLPGRDPAQVQRQTQRHLNQRLSSQPYHLPSCGSVFRNPETHPAGWLIEQVGLKGYRIGGAQISERHANFILNCGQASANDIYRLICLAQEKVYQRWSIFLEPEVRILGSFDDPLIS.

Residues 33–199 enclose the FAD-binding PCMH-type domain; that stretch reads RVGGKAEWYC…TGATLQLLPG (167 aa). Arginine 178 is an active-site residue. The active-site Proton donor is serine 229. Glutamate 299 is an active-site residue.

This sequence belongs to the MurB family. The cofactor is FAD.

Its subcellular location is the cytoplasm. The enzyme catalyses UDP-N-acetyl-alpha-D-muramate + NADP(+) = UDP-N-acetyl-3-O-(1-carboxyvinyl)-alpha-D-glucosamine + NADPH + H(+). It functions in the pathway cell wall biogenesis; peptidoglycan biosynthesis. Functionally, cell wall formation. The polypeptide is UDP-N-acetylenolpyruvoylglucosamine reductase (Synechococcus sp. (strain JA-3-3Ab) (Cyanobacteria bacterium Yellowstone A-Prime)).